Reading from the N-terminus, the 493-residue chain is Cytoplasmic tRNA 2-thiolation protein 2 (493 aa).

Serine 489 is subject to Phosphoserine.

Belongs to the CTU2/NCS2 family. Interacts with NCS6 and URM1. May act by forming a heterodimer with NCS6.

The protein resides in the cytoplasm. It functions in the pathway tRNA modification; 5-methoxycarbonylmethyl-2-thiouridine-tRNA biosynthesis. Functionally, plays a central role in 2-thiolation of mcm(5)S(2)U at tRNA wobble positions of tRNA(Lys), tRNA(Glu) and tRNA(Gln). May act by forming a heterodimer with NCS6 that ligates sulfur from thiocarboxylated URM1 onto the uridine of tRNAs at wobble position. Prior mcm(5) tRNA modification by the elongator complex is required for 2-thiolation. May also be involved in protein urmylation. This Saccharomyces cerevisiae (strain AWRI1631) (Baker's yeast) protein is Cytoplasmic tRNA 2-thiolation protein 2.